Here is a 454-residue protein sequence, read N- to C-terminus: Mannosylfructose-phosphate synthase (454 aa).

It belongs to the glycosyltransferase 1 family. Mg(2+) is required as a cofactor. Mn(2+) serves as cofactor.

The catalysed reaction is beta-D-fructose 6-phosphate + GDP-alpha-D-mannose = beta-D-fructofuranosyl alpha-D-mannopyranoside 6(F)-phosphate + GDP + H(+). Its pathway is carbohydrate metabolism; mannosylfructose biosynthesis; beta-D-fructofuranosyl alpha-D-mannopyranoside from D-fructose 6-phosphate and GDP-alpha-D-mannose: step 1/2. In Agrobacterium fabrum (strain C58 / ATCC 33970) (Agrobacterium tumefaciens (strain C58)), this protein is Mannosylfructose-phosphate synthase.